A 29-amino-acid polypeptide reads, in one-letter code: Cytochrome c oxidase subunit 7A2, mitochondrial (29 aa).

K10 is modified (N6-acetyllysine).

Belongs to the cytochrome c oxidase VIIa family. In terms of assembly, component of the cytochrome c oxidase (complex IV, CIV), a multisubunit enzyme composed of 14 subunits. The complex is composed of a catalytic core of 3 subunits MT-CO1, MT-CO2 and MT-CO3, encoded in the mitochondrial DNA, and 11 supernumerary subunits COX4I, COX5A, COX5B, COX6A, COX6B, COX6C, COX7A, COX7B, COX7C, COX8 and NDUFA4, which are encoded in the nuclear genome. The complex exists as a monomer or a dimer and forms supercomplexes (SCs) in the inner mitochondrial membrane with NADH-ubiquinone oxidoreductase (complex I, CI) and ubiquinol-cytochrome c oxidoreductase (cytochrome b-c1 complex, complex III, CIII), resulting in different assemblies (supercomplex SCI(1)III(2)IV(1) and megacomplex MCI(2)III(2)IV(2)). Interacts with PET100.

It is found in the mitochondrion inner membrane. Its pathway is energy metabolism; oxidative phosphorylation. Its function is as follows. Component of the cytochrome c oxidase, the last enzyme in the mitochondrial electron transport chain which drives oxidative phosphorylation. The respiratory chain contains 3 multisubunit complexes succinate dehydrogenase (complex II, CII), ubiquinol-cytochrome c oxidoreductase (cytochrome b-c1 complex, complex III, CIII) and cytochrome c oxidase (complex IV, CIV), that cooperate to transfer electrons derived from NADH and succinate to molecular oxygen, creating an electrochemical gradient over the inner membrane that drives transmembrane transport and the ATP synthase. Cytochrome c oxidase is the component of the respiratory chain that catalyzes the reduction of oxygen to water. Electrons originating from reduced cytochrome c in the intermembrane space (IMS) are transferred via the dinuclear copper A center (CU(A)) of subunit 2 and heme A of subunit 1 to the active site in subunit 1, a binuclear center (BNC) formed by heme A3 and copper B (CU(B)). The BNC reduces molecular oxygen to 2 water molecules using 4 electrons from cytochrome c in the IMS and 4 protons from the mitochondrial matrix. The protein is Cytochrome c oxidase subunit 7A2, mitochondrial (COX7A2) of Canis lupus familiaris (Dog).